The chain runs to 102 residues: Small ribosomal subunit protein uS10 (102 aa).

This sequence belongs to the universal ribosomal protein uS10 family. In terms of assembly, part of the 30S ribosomal subunit.

Involved in the binding of tRNA to the ribosomes. The chain is Small ribosomal subunit protein uS10 (rpsJ) from Bacillus subtilis (strain 168).